We begin with the raw amino-acid sequence, 500 residues long: Farnesylcysteine lyase (500 aa).

An N-terminal signal peptide occupies residues 1 to 24; sequence MKDFPIAISLLFALLSPVLLPCSG. N-linked (GlcNAc...) asparagine glycosylation is found at Asn56, Asn113, Asn211, and Asn281.

Belongs to the prenylcysteine oxidase family. FAD is required as a cofactor. Expressed in seedilings, flowers, stems, leaves and roots.

It localises to the lysosome. The enzyme catalyses S-(2E,6E)-farnesyl-L-cysteine + O2 + H2O = (2E,6E)-farnesal + L-cysteine + H2O2. In terms of biological role, involved in the degradation of prenylcysteine. Cleaves specifically the thioether bond of S-farnesyl-L-cysteine and has no activity with S-geranylgeranyl-L-cysteine. Also recognizes N-acetyl-farnesylcysteine and may have a role in deprenylation of farnesylated proteins. This chain is Farnesylcysteine lyase, found in Arabidopsis thaliana (Mouse-ear cress).